The sequence spans 260 residues: Hemin import ATP-binding protein HmuV (260 aa).

The ABC transporter domain occupies 3 to 239; that stretch reads LHAQQISLSI…QRLSEVYGCD (237 aa). 35–42 contributes to the ATP binding site; that stretch reads GPNGSGKS.

The protein belongs to the ABC transporter superfamily. Heme (hemin) importer (TC 3.A.1.14.5) family. In terms of assembly, the complex is composed of two ATP-binding proteins (HmuV), two transmembrane proteins (HmuU) and a solute-binding protein (HmuT).

It localises to the cell inner membrane. Part of the ABC transporter complex HmuTUV involved in hemin import. Responsible for energy coupling to the transport system. The sequence is that of Hemin import ATP-binding protein HmuV from Ruegeria sp. (strain TM1040) (Silicibacter sp.).